Here is a 301-residue protein sequence, read N- to C-terminus: HTH-type transcriptional regulator MtrA (301 aa).

The HTH araC/xylS-type domain maps to 196 to 297 (KRLGHLIQKV…HVSPGQYRKE (102 aa)). DNA-binding regions (H-T-H motif) lie at residues 216–237 (DKMV…KSQV) and 264–287 (VLEV…KRQY).

Its activity is regulated as follows. The affinity for the mtrCDE promoter increases 2-fold in the presence of TX-100, a known effector and substrate of the MtrCDE pump. Functionally, involved in the induction of the mtrCDE-encoded efflux pump. Binds specifically to the mtrCDE promoter region. Required for high-level inducible resistance to the detergent Triton X-100 (TX-100) and the spermicide nonoxynol-9 (N-9). The protein is HTH-type transcriptional regulator MtrA of Neisseria gonorrhoeae.